Here is a 348-residue protein sequence, read N- to C-terminus: Phenylalanine--tRNA ligase alpha subunit (348 aa).

E268 is a Mg(2+) binding site.

Belongs to the class-II aminoacyl-tRNA synthetase family. Phe-tRNA synthetase alpha subunit type 1 subfamily. In terms of assembly, tetramer of two alpha and two beta subunits. It depends on Mg(2+) as a cofactor.

The protein resides in the cytoplasm. It catalyses the reaction tRNA(Phe) + L-phenylalanine + ATP = L-phenylalanyl-tRNA(Phe) + AMP + diphosphate + H(+). This chain is Phenylalanine--tRNA ligase alpha subunit, found in Bordetella bronchiseptica (strain ATCC BAA-588 / NCTC 13252 / RB50) (Alcaligenes bronchisepticus).